Consider the following 232-residue polypeptide: Large ribosomal subunit protein uL16m (232 aa).

The N-terminal 41 residues, 1-41, are a transit peptide targeting the mitochondrion; sequence MFPYLTRMNLSIKMGGLTLKESSPNAFLNNTTIARRFKHEY.

This sequence belongs to the universal ribosomal protein uL16 family. Component of the mitochondrial large ribosomal subunit (mt-LSU). Mature yeast 74S mitochondrial ribosomes consist of a small (37S) and a large (54S) subunit. The 37S small subunit contains a 15S ribosomal RNA (15S mt-rRNA) and 34 different proteins. The 54S large subunit contains a 21S rRNA (21S mt-rRNA) and 46 different proteins.

It localises to the mitochondrion. Component of the mitochondrial ribosome (mitoribosome), a dedicated translation machinery responsible for the synthesis of mitochondrial genome-encoded proteins, including at least some of the essential transmembrane subunits of the mitochondrial respiratory chain. The mitoribosomes are attached to the mitochondrial inner membrane and translation products are cotranslationally integrated into the membrane. The protein is Large ribosomal subunit protein uL16m (MRPL16) of Saccharomyces cerevisiae (strain ATCC 204508 / S288c) (Baker's yeast).